Reading from the N-terminus, the 1076-residue chain is Nickel and cobalt resistance protein CnrA (1076 aa).

The next 12 helical transmembrane spans lie at 14–34, 366–386, 390–410, 418–438, 475–495, 502–522, 561–581, 903–923, 928–948, 959–979, 1003–1023, and 1035–1055; these read WLVL…LNLL, TVAK…FALL, RAAT…AIGM, NLMS…VIIV, PTVY…TFQG, SPMV…SLTF, PMPF…AFTF, RLAI…YMAI, LTAT…FALL, AVGF…LISA, RPVL…AIAT, and TVVI…LPAL.

This sequence belongs to the resistance-nodulation-cell division (RND) (TC 2.A.6) family.

It is found in the cell inner membrane. In terms of biological role, the products of the genes cnrA, cnrB, and cnrC are likely to form a membrane-bound protein complex catalyzing an energy-dependent efflux of Ni(2+) and Co(2+). The mechanism of action of the CnrCBA complex may be that of a proton/cation antiporter. In Cupriavidus metallidurans (strain ATCC 43123 / DSM 2839 / NBRC 102507 / CH34) (Ralstonia metallidurans), this protein is Nickel and cobalt resistance protein CnrA (cnrA).